The sequence spans 199 residues: Interleukin-11 (199 aa).

The signal sequence occupies residues 1–21 (MNCVCRLVLVVLSLWPDRVVA). The tract at residues 182–190 (HLTLDWAVR) is important for interaction with IL11RA and for the stimulation of cell proliferation.

The protein belongs to the IL-6 superfamily. In terms of assembly, interacts with IL11RA to associate with IL6ST, giving rise to a multimeric signaling complex.

It is found in the secreted. Cytokine that stimulates the proliferation of hematopoietic stem cells and megakaryocyte progenitor cells and induces megakaryocyte maturation resulting in increased platelet production. Also promotes the proliferation of hepatocytes in response to liver damage. Binding to its receptor formed by IL6ST and IL11RA activates a signaling cascade that promotes cell proliferation. Signaling leads to the activation of intracellular protein kinases and the phosphorylation of STAT3. The interaction with the membrane-bound IL11RA and IL6ST stimulates 'classic signaling', whereas the binding of IL11 and soluble IL11RA to IL6ST stimulates 'trans-signaling'. This is Interleukin-11 from Rattus norvegicus (Rat).